Here is a 183-residue protein sequence, read N- to C-terminus: Ribosome-recycling factor (183 aa).

The protein belongs to the RRF family.

It is found in the cytoplasm. Its function is as follows. Responsible for the release of ribosomes from messenger RNA at the termination of protein biosynthesis. May increase the efficiency of translation by recycling ribosomes from one round of translation to another. This Deinococcus deserti (strain DSM 17065 / CIP 109153 / LMG 22923 / VCD115) protein is Ribosome-recycling factor.